The sequence spans 273 residues: Large ribosomal subunit protein uL2 (273 aa).

The segment at Arg-221 to Lys-273 is disordered. Residues Lys-253–Lys-273 are compositionally biased toward basic residues.

The protein belongs to the universal ribosomal protein uL2 family. Part of the 50S ribosomal subunit. Forms a bridge to the 30S subunit in the 70S ribosome.

In terms of biological role, one of the primary rRNA binding proteins. Required for association of the 30S and 50S subunits to form the 70S ribosome, for tRNA binding and peptide bond formation. It has been suggested to have peptidyltransferase activity; this is somewhat controversial. Makes several contacts with the 16S rRNA in the 70S ribosome. This is Large ribosomal subunit protein uL2 from Mannheimia succiniciproducens (strain KCTC 0769BP / MBEL55E).